We begin with the raw amino-acid sequence, 1523 residues long: TALPID3 protein (1523 aa).

Over residues 1–16 (MEAESGSSTSQDSLAS) the composition is skewed to polar residues. 2 disordered regions span residues 1–20 (MEAESGSSTSQDSLASLTAG) and 57–84 (SRQAAGVALSRGETPCEPPVPSSGASNG). 2 coiled-coil regions span residues 428–466 (IEKTVKKADDLLQVLGQLRKEMHDMLQEASSWKSDMNDL) and 499–528 (ILSDAKRVLREVQSRKKVLEENLEAVLRAK). Positions 498–585 (SILSDAKRVL…MEQVKYDQKV (88 aa)) are required for centrosomal localization. Disordered stretches follow at residues 1070 to 1112 (EPLV…LSGD), 1137 to 1262 (VITP…SEGE), 1294 to 1313 (ANEMDYDPPSEGQVVRRSHK), 1373 to 1410 (DIDHATARASEDRPYQGSRSPSPGQLTHPAEILGDADT), and 1498 to 1523 (SMNIDDQTQSLSSIHGDSDSSGADTF). The segment covering 1073–1088 (VPTPLPTPQATPPQTP) has biased composition (pro residues). Residues 1099-1108 (TPESSPSITE) are compositionally biased toward polar residues. Low complexity-rich tracts occupy residues 1137 to 1149 (VITPISTPPEIIT) and 1236 to 1251 (SSEQSTQESSLTPTET). The span at 1373-1386 (DIDHATARASEDRP) shows a compositional bias: basic and acidic residues. Positions 1507–1523 (SLSSIHGDSDSSGADTF) are enriched in low complexity.

Belongs to the TALPID3 family. Ubiquitously expressed.

Its subcellular location is the cytoplasm. The protein resides in the cytoskeleton. The protein localises to the microtubule organizing center. It localises to the centrosome. Its function is as follows. Required for ciliogenesis and sonic hedgehog/SHH signaling. Independently, involved in regulation of cell intracellular organization. Involved in regulation of cell polarity. In Gallus gallus (Chicken), this protein is TALPID3 protein (TALPID3).